The sequence spans 225 residues: Octanoyltransferase (225 aa).

One can recognise a BPL/LPL catalytic domain in the interval 44–219 (RETPDEIWLL…NFIAQLTHRI (176 aa)). Substrate contacts are provided by residues 83 to 90 (RGGQITYH), 150 to 152 (SLG), and 163 to 165 (GIA). Catalysis depends on Cys181, which acts as the Acyl-thioester intermediate.

The protein belongs to the LipB family.

The protein localises to the cytoplasm. The enzyme catalyses octanoyl-[ACP] + L-lysyl-[protein] = N(6)-octanoyl-L-lysyl-[protein] + holo-[ACP] + H(+). Its pathway is protein modification; protein lipoylation via endogenous pathway; protein N(6)-(lipoyl)lysine from octanoyl-[acyl-carrier-protein]: step 1/2. Its function is as follows. Catalyzes the transfer of endogenously produced octanoic acid from octanoyl-acyl-carrier-protein onto the lipoyl domains of lipoate-dependent enzymes. Lipoyl-ACP can also act as a substrate although octanoyl-ACP is likely to be the physiological substrate. In Nitrosomonas eutropha (strain DSM 101675 / C91 / Nm57), this protein is Octanoyltransferase.